We begin with the raw amino-acid sequence, 296 residues long: GTPase Era (296 aa).

Residues 3 to 170 enclose the Era-type G domain; sequence KSGFITIVGR…LELMVKYLPE (168 aa). Residues 11–18 form a G1 region; sequence GRPNVGKS. 11–18 lines the GTP pocket; sequence GRPNVGKS. The G2 stretch occupies residues 37 to 41; it reads QTTRN. Positions 58 to 61 are G3; sequence DTPG. GTP is bound by residues 58-62 and 120-123; these read DTPGI and NKVD. The interval 120–123 is G4; it reads NKVD. Residues 149-151 form a G5 region; sequence ISA. Residues 201-278 enclose the KH type-2 domain; sequence LSQEVPHGIA…NIKIWVKVRK (78 aa).

It belongs to the TRAFAC class TrmE-Era-EngA-EngB-Septin-like GTPase superfamily. Era GTPase family. Monomer.

Its subcellular location is the cytoplasm. It localises to the cell membrane. In terms of biological role, an essential GTPase that binds both GDP and GTP, with rapid nucleotide exchange. Plays a role in 16S rRNA processing and 30S ribosomal subunit biogenesis and possibly also in cell cycle regulation and energy metabolism. In Clostridium perfringens (strain 13 / Type A), this protein is GTPase Era.